Here is a 509-residue protein sequence, read N- to C-terminus: Putative ATP-dependent RNA helicase QP509L (509 aa).

Positions 110–262 (KKLLPPYGRF…KIIIHHLGQP (153 aa)) constitute a Helicase ATP-binding domain. ATP is bound at residue 123-130 (LNTGLGKT). The short motif at 215–218 (DEAH) is the DEAH box element.

Belongs to the DEAD box helicase family. DEAH subfamily.

It catalyses the reaction ATP + H2O = ADP + phosphate + H(+). This chain is Putative ATP-dependent RNA helicase QP509L, found in African swine fever virus (isolate Tick/Malawi/Lil 20-1/1983) (ASFV).